The primary structure comprises 239 residues: Probable transcriptional regulatory protein BCQ_0605 (239 aa).

This sequence belongs to the TACO1 family. YeeN subfamily.

It localises to the cytoplasm. The polypeptide is Probable transcriptional regulatory protein BCQ_0605 (Bacillus cereus (strain Q1)).